The following is a 109-amino-acid chain: N-alpha-acetyltransferase 38, NatC auxiliary subunit (109 aa).

Residues 23–101 (LARCKLENLL…VVSIEVETES (79 aa)) form the Sm domain.

Belongs to the snRNP Sm proteins family. Component of the N-terminal acetyltransferase C (NatC) complex.

Its subcellular location is the cytoplasm. The protein resides in the nucleus. In terms of biological role, auxillary component of the N-terminal acetyltransferase C (NatC) complex which catalyzes acetylation of N-terminal methionine residues. N-terminal acetylation protects proteins from ubiquitination and degradation by the N-end rule pathway. The protein is N-alpha-acetyltransferase 38, NatC auxiliary subunit (naa38) of Danio rerio (Zebrafish).